The chain runs to 377 residues: UPF0754 membrane protein LMHCC_0318 (377 aa).

2 helical membrane passes run 1–21 (MSVLFTILLMAVIGGFIGAMT) and 357–377 (YLGGILGGFIGVIQGILAMWI).

It belongs to the UPF0754 family.

It localises to the cell membrane. The chain is UPF0754 membrane protein LMHCC_0318 from Listeria monocytogenes serotype 4a (strain HCC23).